The sequence spans 653 residues: MAIDGYLWMVILGFIIAFILAFSVGANDVANSFGTAVGSGVVTLRQACILASIFETTGSVLLGAKVGETIRKGIIDVNLYNETVETLMAGEVSAMVGSAVWQLIASFLRLPISGTHCIVGSTIGFSLVAIGTQGVQWMELVKIVASWFISPLLSGFMSGVLFILIRIFILKKEDPVPNGLRALPVFYAATIAINVFSIMYTGAPVLGLVLPIWAIALISFGVALLFALFVWLFVCPWMRRKIAGKLQKEAALSRVSDESLSKIQEVESPVFKELPGAKANDDSTVPLTGSAGEPSGTSEGTSVGNHPRASYGRALSMTHGSAKSPVSNGTFGFDGHTRSDGHVYHTVHKDSGLYKDLLHRIHSDRGPEERPAQENNYRFLRRNNSYTCYTAAICGMPVHSTFKAADSSSAPEDSEKLVGDAVSYSKKRLRYDSYSSYCNAVAEAEIEADEGGVEMKLASELTDPDQPRDDPAEEEKEEKDTAEVHLLFHFLQVLTACFGSFAHGGNDVSNAIGPLVALWLIYEQGAVLQEAVTPVWLLFYGGVGICTGLWVWGRRVIQTMGKDLTPITPSSGFTIELASAFTVVIASNVGLPVSTTHCKVGSVVAVGWIRSRKAVDWRLFRNIFVAWFVTVPVAGLFSAAIMALLMYGILPYV.

Over 1–5 (MAIDG) the chain is Extracellular. The chain crosses the membrane as a helical span at residues 6–26 (YLWMVILGFIIAFILAFSVGA). Topologically, residues 27–46 (NDVANSFGTAVGSGVVTLRQ) are cytoplasmic. Residues 47-67 (ACILASIFETTGSVLLGAKVG) traverse the membrane as a helical segment. Residues 68–86 (ETIRKGIIDVNLYNETVET) lie on the Extracellular side of the membrane. An N-linked (GlcNAc...) asparagine glycan is attached at asparagine 81. The helical transmembrane segment at 87 to 107 (LMAGEVSAMVGSAVWQLIASF) threads the bilayer. At 108–109 (LR) the chain is on the cytoplasmic side. A helical membrane pass occupies residues 110 to 130 (LPISGTHCIVGSTIGFSLVAI). Residues 131 to 142 (GTQGVQWMELVK) are Extracellular-facing. The helical transmembrane segment at 143 to 163 (IVASWFISPLLSGFMSGVLFI) threads the bilayer. Over 164–190 (LIRIFILKKEDPVPNGLRALPVFYAAT) the chain is Cytoplasmic. The helical transmembrane segment at 191 to 211 (IAINVFSIMYTGAPVLGLVLP) threads the bilayer. At 212–213 (IW) the chain is on the extracellular side. A helical transmembrane segment spans residues 214 to 234 (AIALISFGVALLFALFVWLFV). At 235–483 (CPWMRRKIAG…EEKEEKDTAE (249 aa)) the chain is on the cytoplasmic side. Serine 253, serine 256, serine 259, and serine 268 each carry phosphoserine. The disordered stretch occupies residues 275–311 (PGAKANDDSTVPLTGSAGEPSGTSEGTSVGNHPRASY). Over residues 295–304 (SGTSEGTSVG) the composition is skewed to polar residues. Serine 316 and serine 385 each carry phosphoserine. The disordered stretch occupies residues 459–478 (SELTDPDQPRDDPAEEEKEE). A helical membrane pass occupies residues 484-504 (VHLLFHFLQVLTACFGSFAHG). Residues 505–531 (GNDVSNAIGPLVALWLIYEQGAVLQEA) lie on the Extracellular side of the membrane. Residues 532–552 (VTPVWLLFYGGVGICTGLWVW) traverse the membrane as a helical segment. Topologically, residues 553-572 (GRRVIQTMGKDLTPITPSSG) are cytoplasmic. Residues 573–587 (FTIELASAFTVVIAS) traverse the membrane as a helical segment. At 588–594 (NVGLPVS) the chain is on the extracellular side. The helical transmembrane segment at 595–610 (TTHCKVGSVVAVGWIR) threads the bilayer. Over 611 to 622 (SRKAVDWRLFRN) the chain is Cytoplasmic. A helical membrane pass occupies residues 623-643 (IFVAWFVTVPVAGLFSAAIMA). Topologically, residues 644 to 653 (LLMYGILPYV) are extracellular.

This sequence belongs to the inorganic phosphate transporter (PiT) (TC 2.A.20) family. Homodimer.

It is found in the cell membrane. The protein localises to the apical cell membrane. It carries out the reaction 2 Na(+)(out) + phosphate(out) = 2 Na(+)(in) + phosphate(in). Functionally, sodium-phosphate symporter which preferentially transports the monovalent form of phosphate with a stoichiometry of two sodium ions per phosphate ion. Plays a critical role in the determination of bone quality and strength by providing phosphate for bone mineralization. Required to maintain normal cerebrospinal fluid phosphate levels. Mediates phosphate-induced calcification of vascular smooth muscle cells (VCMCs) and can functionally compensate for loss of SLC20A1 in VCMCs. Its function is as follows. (Microbial infection) Functions as a retroviral receptor for feline leukemia virus subgroup B (FeLV-B). This Felis catus (Cat) protein is Sodium-dependent phosphate transporter 2 (SLC20A2).